Consider the following 310-residue polypeptide: Nucleotide-binding protein BLA_1368 (310 aa).

Residues 1–21 (MQSARNEQRGTGPESPHAASP) are disordered. 32–39 (GMSGAGRS) serves as a coordination point for ATP. 83–86 (DVRS) is a binding site for GTP.

It belongs to the RapZ-like family.

Displays ATPase and GTPase activities. The protein is Nucleotide-binding protein BLA_1368 of Bifidobacterium animalis subsp. lactis (strain AD011).